Reading from the N-terminus, the 443-residue chain is Ribulose bisphosphate carboxylase large chain (443 aa).

The substrate site is built by asparagine 89 and threonine 139. Catalysis depends on lysine 141, which acts as the Proton acceptor. A substrate-binding site is contributed by lysine 143. Mg(2+) is bound by residues lysine 167, aspartate 169, and glutamate 170. Lysine 167 carries the N6-carboxylysine modification. Histidine 260 (proton acceptor) is an active-site residue. Arginine 261, histidine 293, and serine 345 together coordinate substrate.

It belongs to the RuBisCO large chain family. Type I subfamily. As to quaternary structure, heterohexadecamer of 8 large chains and 8 small chains; disulfide-linked. The disulfide link is formed within the large subunit homodimers. Mg(2+) serves as cofactor. Post-translationally, the disulfide bond which can form in the large chain dimeric partners within the hexadecamer appears to be associated with oxidative stress and protein turnover.

It is found in the plastid. The protein localises to the chloroplast. The catalysed reaction is 2 (2R)-3-phosphoglycerate + 2 H(+) = D-ribulose 1,5-bisphosphate + CO2 + H2O. It carries out the reaction D-ribulose 1,5-bisphosphate + O2 = 2-phosphoglycolate + (2R)-3-phosphoglycerate + 2 H(+). RuBisCO catalyzes two reactions: the carboxylation of D-ribulose 1,5-bisphosphate, the primary event in carbon dioxide fixation, as well as the oxidative fragmentation of the pentose substrate in the photorespiration process. Both reactions occur simultaneously and in competition at the same active site. In Buddleja davidii (Butterfly bush), this protein is Ribulose bisphosphate carboxylase large chain.